The chain runs to 270 residues: Aliphatic sulfonates import ATP-binding protein SsuB 3 (270 aa).

The region spanning 17–238 (LAVRNLKKAF…VRGSHRLAAL (222 aa)) is the ABC transporter domain. 49–56 (GRSGCGKS) contributes to the ATP binding site.

Belongs to the ABC transporter superfamily. Aliphatic sulfonates importer (TC 3.A.1.17.2) family. The complex is composed of two ATP-binding proteins (SsuB), two transmembrane proteins (SsuC) and a solute-binding protein (SsuA).

Its subcellular location is the cell inner membrane. It catalyses the reaction ATP + H2O + aliphatic sulfonate-[sulfonate-binding protein]Side 1 = ADP + phosphate + aliphatic sulfonateSide 2 + [sulfonate-binding protein]Side 1.. Functionally, part of the ABC transporter complex SsuABC involved in aliphatic sulfonates import. Responsible for energy coupling to the transport system. This chain is Aliphatic sulfonates import ATP-binding protein SsuB 3, found in Pseudomonas savastanoi pv. phaseolicola (strain 1448A / Race 6) (Pseudomonas syringae pv. phaseolicola (strain 1448A / Race 6)).